A 358-amino-acid chain; its full sequence is UDP-N-acetylglucosamine--N-acetylmuramyl-(pentapeptide) pyrophosphoryl-undecaprenol N-acetylglucosamine transferase (358 aa).

UDP-N-acetyl-alpha-D-glucosamine contacts are provided by residues 11 to 13 (TGG), Asn122, Arg161, Ser189, Ile243, 262 to 267 (ALTVCE), and Gln288.

The protein belongs to the glycosyltransferase 28 family. MurG subfamily.

It is found in the cell inner membrane. The enzyme catalyses di-trans,octa-cis-undecaprenyl diphospho-N-acetyl-alpha-D-muramoyl-L-alanyl-D-glutamyl-meso-2,6-diaminopimeloyl-D-alanyl-D-alanine + UDP-N-acetyl-alpha-D-glucosamine = di-trans,octa-cis-undecaprenyl diphospho-[N-acetyl-alpha-D-glucosaminyl-(1-&gt;4)]-N-acetyl-alpha-D-muramoyl-L-alanyl-D-glutamyl-meso-2,6-diaminopimeloyl-D-alanyl-D-alanine + UDP + H(+). It participates in cell wall biogenesis; peptidoglycan biosynthesis. Its function is as follows. Cell wall formation. Catalyzes the transfer of a GlcNAc subunit on undecaprenyl-pyrophosphoryl-MurNAc-pentapeptide (lipid intermediate I) to form undecaprenyl-pyrophosphoryl-MurNAc-(pentapeptide)GlcNAc (lipid intermediate II). This Coxiella burnetii (strain CbuK_Q154) (Coxiella burnetii (strain Q154)) protein is UDP-N-acetylglucosamine--N-acetylmuramyl-(pentapeptide) pyrophosphoryl-undecaprenol N-acetylglucosamine transferase.